The chain runs to 146 residues: Large ribosomal subunit protein uL15 (146 aa).

The interval 1–65 is disordered; the sequence is MSDIQLNTLK…GQMPLQRRLP (65 aa). Residues 24-34 are compositionally biased toward gly residues; sequence RGIGSGLGKTA.

This sequence belongs to the universal ribosomal protein uL15 family. As to quaternary structure, part of the 50S ribosomal subunit.

In terms of biological role, binds to the 23S rRNA. This Bordetella parapertussis (strain 12822 / ATCC BAA-587 / NCTC 13253) protein is Large ribosomal subunit protein uL15.